We begin with the raw amino-acid sequence, 365 residues long: Isopentenyl-diphosphate delta-isomerase (365 aa).

8–9 (RK) is a binding site for substrate. FMN is bound by residues 67 to 69 (SIT), serine 97, and asparagine 126. 97–99 (SQR) lines the substrate pocket. Glutamine 160 serves as a coordination point for substrate. Glutamate 161 is a binding site for Mg(2+). FMN contacts are provided by residues lysine 192, threonine 222, 272–274 (GVR), and 293–294 (AL).

Belongs to the IPP isomerase type 2 family. As to quaternary structure, homooctamer. Dimer of tetramers. The cofactor is FMN. Requires NADPH as cofactor. Mg(2+) is required as a cofactor.

It localises to the cytoplasm. The enzyme catalyses isopentenyl diphosphate = dimethylallyl diphosphate. In terms of biological role, involved in the biosynthesis of isoprenoids. Catalyzes the 1,3-allylic rearrangement of the homoallylic substrate isopentenyl (IPP) to its allylic isomer, dimethylallyl diphosphate (DMAPP). The sequence is that of Isopentenyl-diphosphate delta-isomerase from Methanosarcina acetivorans (strain ATCC 35395 / DSM 2834 / JCM 12185 / C2A).